Reading from the N-terminus, the 128-residue chain is Aspartate 1-decarboxylase (128 aa).

S25 acts as the Schiff-base intermediate with substrate; via pyruvic acid in catalysis. Residue S25 is modified to Pyruvic acid (Ser). T57 provides a ligand contact to substrate. The active-site Proton donor is Y58. A substrate-binding site is contributed by 73 to 75 (GSA).

Belongs to the PanD family. As to quaternary structure, heterooctamer of four alpha and four beta subunits. Pyruvate is required as a cofactor. Is synthesized initially as an inactive proenzyme, which is activated by self-cleavage at a specific serine bond to produce a beta-subunit with a hydroxyl group at its C-terminus and an alpha-subunit with a pyruvoyl group at its N-terminus.

Its subcellular location is the cytoplasm. The catalysed reaction is L-aspartate + H(+) = beta-alanine + CO2. It participates in cofactor biosynthesis; (R)-pantothenate biosynthesis; beta-alanine from L-aspartate: step 1/1. In terms of biological role, catalyzes the pyruvoyl-dependent decarboxylation of aspartate to produce beta-alanine. The sequence is that of Aspartate 1-decarboxylase from Burkholderia lata (strain ATCC 17760 / DSM 23089 / LMG 22485 / NCIMB 9086 / R18194 / 383).